Reading from the N-terminus, the 331-residue chain is Peroxidase 69 (331 aa).

An N-terminal signal peptide occupies residues 1–23; the sequence is MGRGYNLLFVLVTFLVLVAAVTA. 4 cysteine pairs are disulfide-bonded: cysteine 46–cysteine 122, cysteine 79–cysteine 84, cysteine 128–cysteine 327, and cysteine 205–cysteine 237. Histidine 77 acts as the Proton acceptor in catalysis. Residues aspartate 78, valine 81, glycine 83, aspartate 85, and serine 87 each contribute to the Ca(2+) site. An N-linked (GlcNAc...) asparagine glycan is attached at asparagine 93. Proline 168 lines the substrate pocket. Heme b is bound at residue histidine 198. Threonine 199 serves as a coordination point for Ca(2+). Asparagine 216 carries an N-linked (GlcNAc...) asparagine glycan. Ca(2+) contacts are provided by aspartate 248, serine 251, and aspartate 256.

It belongs to the peroxidase family. Classical plant (class III) peroxidase subfamily. Heme b serves as cofactor. It depends on Ca(2+) as a cofactor. In terms of tissue distribution, mainly expressed in roots and slightly in leaves.

The protein localises to the secreted. The enzyme catalyses 2 a phenolic donor + H2O2 = 2 a phenolic radical donor + 2 H2O. Functionally, removal of H(2)O(2), oxidation of toxic reductants, biosynthesis and degradation of lignin, suberization, auxin catabolism, response to environmental stresses such as wounding, pathogen attack and oxidative stress. These functions might be dependent on each isozyme/isoform in each plant tissue. In Arabidopsis thaliana (Mouse-ear cress), this protein is Peroxidase 69 (PER69).